Here is a 486-residue protein sequence, read N- to C-terminus: Pup--protein ligase (486 aa).

E33 contributes to the Mg(2+) binding site. Position 76 (R76) interacts with ATP. Y78 is a binding site for Mg(2+). The Proton acceptor role is filled by D80. E86 contributes to the Mg(2+) binding site. Residues T89 and W451 each contribute to the ATP site.

This sequence belongs to the Pup ligase/Pup deamidase family. Pup-conjugating enzyme subfamily.

The catalysed reaction is ATP + [prokaryotic ubiquitin-like protein]-L-glutamate + [protein]-L-lysine = ADP + phosphate + N(6)-([prokaryotic ubiquitin-like protein]-gamma-L-glutamyl)-[protein]-L-lysine.. It participates in protein degradation; proteasomal Pup-dependent pathway. The protein operates within protein modification; protein pupylation. Functionally, catalyzes the covalent attachment of the prokaryotic ubiquitin-like protein modifier Pup to the proteasomal substrate proteins, thereby targeting them for proteasomal degradation. This tagging system is termed pupylation. The ligation reaction involves the side-chain carboxylate of the C-terminal glutamate of Pup and the side-chain amino group of a substrate lysine. This chain is Pup--protein ligase, found in Bifidobacterium longum (strain DJO10A).